We begin with the raw amino-acid sequence, 321 residues long: Acetyl-coenzyme A carboxylase carboxyl transferase subunit alpha (321 aa).

The region spanning 32–293 (DISEEIARLQ…KRVLQDQLKE (262 aa)) is the CoA carboxyltransferase C-terminal domain.

Belongs to the AccA family. In terms of assembly, acetyl-CoA carboxylase is a heterohexamer composed of biotin carboxyl carrier protein (AccB), biotin carboxylase (AccC) and two subunits each of ACCase subunit alpha (AccA) and ACCase subunit beta (AccD).

Its subcellular location is the cytoplasm. It catalyses the reaction N(6)-carboxybiotinyl-L-lysyl-[protein] + acetyl-CoA = N(6)-biotinyl-L-lysyl-[protein] + malonyl-CoA. It functions in the pathway lipid metabolism; malonyl-CoA biosynthesis; malonyl-CoA from acetyl-CoA: step 1/1. Its function is as follows. Component of the acetyl coenzyme A carboxylase (ACC) complex. First, biotin carboxylase catalyzes the carboxylation of biotin on its carrier protein (BCCP) and then the CO(2) group is transferred by the carboxyltransferase to acetyl-CoA to form malonyl-CoA. The chain is Acetyl-coenzyme A carboxylase carboxyl transferase subunit alpha from Chromobacterium violaceum (strain ATCC 12472 / DSM 30191 / JCM 1249 / CCUG 213 / NBRC 12614 / NCIMB 9131 / NCTC 9757 / MK).